A 180-amino-acid polypeptide reads, in one-letter code: UPF0227 protein YcfP (180 aa).

The protein belongs to the UPF0227 family.

The protein is UPF0227 protein YcfP of Salmonella arizonae (strain ATCC BAA-731 / CDC346-86 / RSK2980).